A 62-amino-acid polypeptide reads, in one-letter code: Teretoxin Tsu1.1 (62 aa).

An N-terminal signal peptide occupies residues methionine 1–phenylalanine 21. A propeptide spanning residues proline 22–arginine 40 is cleaved from the precursor.

Belongs to the teretoxin A (TA) superfamily. Post-translationally, contains 2 disulfide bonds. In terms of tissue distribution, expressed by the venom duct.

Its subcellular location is the secreted. The polypeptide is Teretoxin Tsu1.1 (Terebra subulata (Chocolate spotted auger)).